A 297-amino-acid chain; its full sequence is F-box only protein 2 (297 aa).

Residues 1 to 47 (MDGDGDPESVSHPEEASPEEQPEEAGAEASAEEEQLREAEEEEEAEA) are disordered. Over residues 16–47 (ASPEEQPEEAGAEASAEEEQLREAEEEEEAEA) the composition is skewed to acidic residues. One can recognise an F-box domain in the interval 48–95 (VEYLAELPEPLLLRVLAELPATELVQACRLVCLRWKELVDGAPLWLLK). At Ser106 the chain carries Phosphoserine. In terms of domain architecture, FBA spans 117-297 (FYFLSKRRRN…VTNSSVWVEP (181 aa)). A carbohydrate is bound by residues 214–216 (RTD) and 279–280 (YW).

Component of the SCF(FBXO2) complex consisting of CUL1, RBX1, SKP1 and FBXO2. Predominantly detected as heterodimer with SKP1; the heterodimer with SKP1 is not part of the SCF(FBXO2) complex. Detected in brain and cochlea, in epithelial support cells and hair cells of the organ of Corti (at protein level).

It is found in the cytoplasm. Its subcellular location is the microsome membrane. It participates in protein modification; protein ubiquitination. Functionally, substrate recognition component of a SCF (SKP1-CUL1-F-box protein) E3 ubiquitin-protein ligase complex that mediates the ubiquitination and subsequent proteasomal degradation of target proteins. Involved in the endoplasmic reticulum-associated degradation pathway (ERAD) for misfolded lumenal proteins by recognizing and binding sugar chains on unfolded glycoproteins that are retrotranslocated into the cytosol and promoting their ubiquitination and subsequent degradation. Prevents formation of cytosolic aggregates of unfolded glycoproteins that have been retrotranslocated into the cytosol. Able to recognize and bind denatured glycoproteins, preferentially those of the high-mannose type. This is F-box only protein 2 (Fbxo2) from Mus musculus (Mouse).